The sequence spans 325 residues: Sensor histidine kinase YxdK (325 aa).

The Cytoplasmic segment spans residues 1–8 (MKLFLRSH). A helical transmembrane segment spans residues 9–29 (AVLILLFLLQGLFVFFYYWFA). The Extracellular portion of the chain corresponds to 30 to 33 (GLHS). Residues 34 to 54 (FSHLFYILGVQLLILAGYLAY) form a helical membrane-spanning segment. At 55–325 (RWYKDRGVYH…SVRFSFLTKM (271 aa)) the chain is on the cytoplasmic side. The 208-residue stretch at 118-325 (QWVHQVKTPL…SVRFSFLTKM (208 aa)) folds into the Histidine kinase domain. His121 carries the post-translational modification Phosphohistidine; by autocatalysis.

The protein localises to the cell membrane. It carries out the reaction ATP + protein L-histidine = ADP + protein N-phospho-L-histidine.. In terms of biological role, probable member of the two-component regulatory system YxdK/YxdJ. May activate YxdJ in response to the antibacterial protein LL-37. In Bacillus subtilis (strain 168), this protein is Sensor histidine kinase YxdK (yxdK).